Here is a 181-residue protein sequence, read N- to C-terminus: Macro domain-containing protein in sno 5'region (181 aa).

One can recognise a Macro domain in the interval 1–172 (MTTITLVQGD…TFARELGDAG (172 aa)).

Belongs to the MacroD-type family.

This chain is Macro domain-containing protein in sno 5'region, found in Streptomyces nogalater.